The sequence spans 82 residues: Capsid protein G8P (82 aa).

Positions 1-28 (MKAMKQRIAKFSPVASFRNLCIAGSVTA) are cleaved as a signal peptide. At 29–57 (ATSLPAFAGVIDTSAVESAITDGQGDMKA) the chain is on the periplasmic side. Residues 58–78 (IGGYIVGALVILAVAGLIYSM) traverse the membrane as a helical segment. The Cytoplasmic portion of the chain corresponds to 79–82 (LRKA).

Belongs to the inovirus capsid protein family. As to quaternary structure, homomultimerizes. There are several thousands of this protein in the phage capsid.

It is found in the virion. The protein localises to the host membrane. Its function is as follows. Self assembles to form a helical capsid wrapping up the viral genomic DNA. The capsid displays a filamentous structure with a length of 760-1950 nm and a width of 6-8 nm. The virion assembly and budding take place at the host inner membrane. The chain is Capsid protein G8P (VIII) from Pseudomonas phage Pf1 (Bacteriophage Pf1).